A 104-amino-acid chain; its full sequence is MKRIKKGDEVIVIAGRSENKGKRGKVVAVKDDTVIIEGINQVSKHVRPNPQLGIEGGIVKKEAGIHISNVMLFNAETGKRDRVGFKIEDGVKFRYYKSTGKRID.

The protein belongs to the universal ribosomal protein uL24 family. As to quaternary structure, part of the 50S ribosomal subunit.

In terms of biological role, one of two assembly initiator proteins, it binds directly to the 5'-end of the 23S rRNA, where it nucleates assembly of the 50S subunit. Functionally, one of the proteins that surrounds the polypeptide exit tunnel on the outside of the subunit. This is Large ribosomal subunit protein uL24 from Dichelobacter nodosus (strain VCS1703A).